The primary structure comprises 192 residues: Orotate phosphoribosyltransferase (192 aa).

Glutamate 116 to serine 124 contacts 5-phospho-alpha-D-ribose 1-diphosphate. 2 residues coordinate orotate: threonine 120 and arginine 148.

This sequence belongs to the purine/pyrimidine phosphoribosyltransferase family. PyrE subfamily. Homodimer. It depends on Mg(2+) as a cofactor.

The catalysed reaction is orotidine 5'-phosphate + diphosphate = orotate + 5-phospho-alpha-D-ribose 1-diphosphate. It functions in the pathway pyrimidine metabolism; UMP biosynthesis via de novo pathway; UMP from orotate: step 1/2. Catalyzes the transfer of a ribosyl phosphate group from 5-phosphoribose 1-diphosphate to orotate, leading to the formation of orotidine monophosphate (OMP). This is Orotate phosphoribosyltransferase from Bartonella bacilliformis (strain ATCC 35685 / KC583 / Herrer 020/F12,63).